We begin with the raw amino-acid sequence, 90 residues long: Serine-rich and transmembrane domain-containing 2 (90 aa).

Residue asparagine 11 is glycosylated (N-linked (GlcNAc...) asparagine). Residues 38–58 (YVGLFLSLLAILLILLFTMLL) traverse the membrane as a helical segment. A disordered region spans residues 69–90 (SDSTESVPQFTDVEMQSRIPTP).

Its subcellular location is the membrane. The sequence is that of Serine-rich and transmembrane domain-containing 2 from Homo sapiens (Human).